Here is a 336-residue protein sequence, read N- to C-terminus: Fructose-1,6-bisphosphatase class 1 (336 aa).

Residues Glu92, Asp115, Leu117, and Asp118 each coordinate Mg(2+). Substrate is bound by residues Asp118–Ser121, Asn211, Tyr244, Tyr262–Tyr264, and Lys274. Mg(2+) is bound at residue Glu280.

The protein belongs to the FBPase class 1 family. Homotetramer. It depends on Mg(2+) as a cofactor.

The protein localises to the cytoplasm. The catalysed reaction is beta-D-fructose 1,6-bisphosphate + H2O = beta-D-fructose 6-phosphate + phosphate. It participates in carbohydrate biosynthesis; gluconeogenesis. The sequence is that of Fructose-1,6-bisphosphatase class 1 from Aliivibrio fischeri (strain ATCC 700601 / ES114) (Vibrio fischeri).